We begin with the raw amino-acid sequence, 326 residues long: Vitamin B12 import system permease protein BtuC (326 aa).

The next 9 membrane-spanning stretches (helical) occupy residues 15-35, 61-81, 88-108, 112-132, 146-166, 184-204, 240-260, 274-294, and 302-322; these read WLLS…CAGE, LAVL…QALF, PGLL…VLLG, LPGW…TLIL, LLAG…AIYF, GGVD…LIWI, GWMV…GLVI, VLLP…DVVA, and ELPI…WLLL.

Belongs to the binding-protein-dependent transport system permease family. FecCD subfamily. In terms of assembly, the complex is composed of two ATP-binding proteins (BtuD), two transmembrane proteins (BtuC) and a solute-binding protein (BtuF).

It is found in the cell inner membrane. Functionally, part of the ABC transporter complex BtuCDF involved in vitamin B12 import. Involved in the translocation of the substrate across the membrane. The polypeptide is Vitamin B12 import system permease protein BtuC (Salmonella agona (strain SL483)).